The following is a 277-amino-acid chain: Phosphatidylglycerol--prolipoprotein diacylglyceryl transferase (277 aa).

4 helical membrane-spanning segments follow: residues 18 to 38, 51 to 71, 89 to 109, and 116 to 136; these read ISVK…LLLA, IIVD…RIYY, IWHG…TAVI, and ISFW…QAIG. Residue R137 coordinates a 1,2-diacyl-sn-glycero-3-phospho-(1'-sn-glycerol). The next 3 helical transmembrane spans lie at 177-197, 205-225, and 235-255; these read QPTF…LLII, GELF…IEGM, and FRVS…LIIY.

It belongs to the Lgt family.

It is found in the cell membrane. The catalysed reaction is L-cysteinyl-[prolipoprotein] + a 1,2-diacyl-sn-glycero-3-phospho-(1'-sn-glycerol) = an S-1,2-diacyl-sn-glyceryl-L-cysteinyl-[prolipoprotein] + sn-glycerol 1-phosphate + H(+). It participates in protein modification; lipoprotein biosynthesis (diacylglyceryl transfer). Catalyzes the transfer of the diacylglyceryl group from phosphatidylglycerol to the sulfhydryl group of the N-terminal cysteine of a prolipoprotein, the first step in the formation of mature lipoproteins. This chain is Phosphatidylglycerol--prolipoprotein diacylglyceryl transferase, found in Listeria innocua serovar 6a (strain ATCC BAA-680 / CLIP 11262).